The sequence spans 463 residues: Exodeoxyribonuclease 7 large subunit (463 aa).

This sequence belongs to the XseA family. As to quaternary structure, heterooligomer composed of large and small subunits.

The protein localises to the cytoplasm. It carries out the reaction Exonucleolytic cleavage in either 5'- to 3'- or 3'- to 5'-direction to yield nucleoside 5'-phosphates.. Functionally, bidirectionally degrades single-stranded DNA into large acid-insoluble oligonucleotides, which are then degraded further into small acid-soluble oligonucleotides. This Klebsiella pneumoniae (strain 342) protein is Exodeoxyribonuclease 7 large subunit.